The chain runs to 259 residues: Dysbindin domain-containing protein 2 (259 aa).

Disordered stretches follow at residues 27-56 (SCERVSPPPPLPHFRLPPLPRSRLPGPVSR) and 174-259 (ADVF…GACS). The span at 32-46 (SPPPPLPHFRLPPLP) shows a compositional bias: pro residues. Positions 205 to 223 (TSDRTTSRTSSSSSSDSST) are enriched in low complexity. A phosphoserine mark is found at Ser217 and Ser218. The residue at position 237 (Thr237) is a Phosphothreonine. Ser242 carries the phosphoserine modification.

Belongs to the dysbindin family. In terms of assembly, monomer. Interacts with CSNK1D and CSNK1E. Detected in brain.

In terms of biological role, may modulate the activity of casein kinase-1. Inhibits CSNK1D autophosphorylation (in vitro). This is Dysbindin domain-containing protein 2 (DBNDD2) from Homo sapiens (Human).